The chain runs to 179 residues: Peptide methionine sulfoxide reductase MsrA (179 aa).

Cys-14 is a catalytic residue.

This sequence belongs to the MsrA Met sulfoxide reductase family.

It carries out the reaction L-methionyl-[protein] + [thioredoxin]-disulfide + H2O = L-methionyl-(S)-S-oxide-[protein] + [thioredoxin]-dithiol. The catalysed reaction is [thioredoxin]-disulfide + L-methionine + H2O = L-methionine (S)-S-oxide + [thioredoxin]-dithiol. Functionally, has an important function as a repair enzyme for proteins that have been inactivated by oxidation. Catalyzes the reversible oxidation-reduction of methionine sulfoxide in proteins to methionine. In Nitrobacter winogradskyi (strain ATCC 25391 / DSM 10237 / CIP 104748 / NCIMB 11846 / Nb-255), this protein is Peptide methionine sulfoxide reductase MsrA.